The chain runs to 1366 residues: DNA-directed RNA polymerase subunit beta (1366 aa).

This sequence belongs to the RNA polymerase beta chain family. As to quaternary structure, the RNAP catalytic core consists of 2 alpha, 1 beta, 1 beta' and 1 omega subunit. When a sigma factor is associated with the core the holoenzyme is formed, which can initiate transcription.

It catalyses the reaction RNA(n) + a ribonucleoside 5'-triphosphate = RNA(n+1) + diphosphate. Its function is as follows. DNA-dependent RNA polymerase catalyzes the transcription of DNA into RNA using the four ribonucleoside triphosphates as substrates. The polypeptide is DNA-directed RNA polymerase subunit beta (Polynucleobacter asymbioticus (strain DSM 18221 / CIP 109841 / QLW-P1DMWA-1) (Polynucleobacter necessarius subsp. asymbioticus)).